Consider the following 520-residue polypeptide: MPGSLPLNAEACWPKDVGIVALEIYFPSQYVDQAELEKYDGVAAGKYTIGLGQAKMGFCTDREDINSLCMTVVQNLMERNNLSYDCIGRLEVGTETIIDKSKSVKTNLMQLFEESGNTDIEGIDTTNACYGGTAAVFNAVNWIESSSWDGRYALVVAGDIAVYATGNARPTGGVGAVALLIGPNAPLIFERGLRGTHMQHAYDFYKPDMLSEYPIVDGKLSIQCYLSALDRCYSVYCKKIRAQWQKEGNDKDFTLNDFGFMIFHSPYCKLVQKSLARMLLNDFLNDQNRDKNSIYSGLEAFGDVKLEDTYFDRDVEKAFMKASSELFSQKTKASLLVSNQNGNMYTSSVYGSLASVLAQYSPQQLAGKRIGVFSYGSGLAATLYSLKVTQDATPGSALDKITASLCDLKSRLDSRTGVAPDVFAENMKLREDTHHLVNYIPQGSIDSLFEGTWYLVRVDEKHRRTYARRPTPNDDTLDEGVGLVHSNIATEHIPSPAKKVPRLPATAAEPEAAVISNGEH.

At Ser4 the chain carries Phosphoserine. Ala44 provides a ligand contact to (3S)-3-hydroxy-3-methylglutaryl-CoA. 44–46 (AGK) is a CoA binding site. The residue at position 46 (Lys46) is an N6-acetyllysine. The Proton donor/acceptor role is filled by Glu95. (3S)-3-hydroxy-3-methylglutaryl-CoA contacts are provided by Cys129, Asn167, Thr171, Ser221, and His264. The active-site Acyl-thioester intermediate is the Cys129. Asn167 serves as a coordination point for CoA. Ser221 is a CoA binding site. His264 functions as the Proton donor/acceptor in the catalytic mechanism. CoA is bound by residues Lys269 and Lys273. (3S)-3-hydroxy-3-methylglutaryl-CoA-binding residues include Lys273, Asn343, and Ser377. Lys273 is modified (N6-acetyllysine). Thr476 carries the phosphothreonine modification. A disordered region spans residues 492–520 (HIPSPAKKVPRLPATAAEPEAAVISNGEH). Phosphoserine occurs at positions 495 and 516.

This sequence belongs to the thiolase-like superfamily. HMG-CoA synthase family. In terms of assembly, homodimer.

The protein localises to the cytoplasm. It catalyses the reaction acetoacetyl-CoA + acetyl-CoA + H2O = (3S)-3-hydroxy-3-methylglutaryl-CoA + CoA + H(+). It participates in metabolic intermediate biosynthesis; (R)-mevalonate biosynthesis; (R)-mevalonate from acetyl-CoA: step 2/3. Catalyzes the condensation of acetyl-CoA with acetoacetyl-CoA to form HMG-CoA, which is converted by HMG-CoA reductase (HMGCR) into mevalonate, a precursor for cholesterol synthesis. The polypeptide is Hydroxymethylglutaryl-CoA synthase, cytoplasmic (Pongo abelii (Sumatran orangutan)).